Here is a 238-residue protein sequence, read N- to C-terminus: ATP synthase subunit a (238 aa).

5 helical membrane-spanning segments follow: residues leucine 18 to alanine 38, tyrosine 76 to phenylalanine 96, asparagine 114 to valine 134, serine 166 to valine 186, and valine 193 to isoleucine 213.

It belongs to the ATPase A chain family. As to quaternary structure, F-type ATPases have 2 components, CF(1) - the catalytic core - and CF(0) - the membrane proton channel. CF(1) has five subunits: alpha(3), beta(3), gamma(1), delta(1), epsilon(1). CF(0) has three main subunits: a(1), b(2) and c(9-12). The alpha and beta chains form an alternating ring which encloses part of the gamma chain. CF(1) is attached to CF(0) by a central stalk formed by the gamma and epsilon chains, while a peripheral stalk is formed by the delta and b chains.

It localises to the cell membrane. Key component of the proton channel; it plays a direct role in the translocation of protons across the membrane. The polypeptide is ATP synthase subunit a (Streptococcus pyogenes serotype M5 (strain Manfredo)).